Here is a 286-residue protein sequence, read N- to C-terminus: Mating type protein A-1 (286 aa).

Residues 40–95 constitute a DNA-binding region (alpha box); it reads AAKKKVNGFMSFRSYYSPLFSQLPQKERSPFMTILWQHDPFHNEWNFMCSVYSSIR.

This sequence belongs to the MATALPHA1 family.

The protein resides in the nucleus. Its function is as follows. Required for expression of the heterokaryon incompatibility and sexual functions. The polypeptide is Mating type protein A-1 (MTA-1) (Neurospora africana).